An 862-amino-acid polypeptide reads, in one-letter code: Semaphorin-4D (862 aa).

A signal peptide spans 1 to 21; it reads MRMCTPIRGLLMALAVMFGTA. Positions 22 to 500 constitute a Sema domain; sequence MAFAPIPRIT…SNSGVVQAPL (479 aa). Residues 22–734 lie on the Extracellular side of the membrane; that stretch reads MAFAPIPRIT…TMYLKSSDNR (713 aa). N-linked (GlcNAc...) asparagine glycosylation is found at asparagine 49 and asparagine 77. 2 disulfide bridges follow: cysteine 97/cysteine 108 and cysteine 126/cysteine 135. N-linked (GlcNAc...) asparagine glycans are attached at residues asparagine 139 and asparagine 191. 2 cysteine pairs are disulfide-bonded: cysteine 257–cysteine 370 and cysteine 281–cysteine 326. Asparagine 329, asparagine 379, and asparagine 419 each carry an N-linked (GlcNAc...) asparagine glycan. The region spanning 502–551 is the PSI domain; sequence FCGKHGTCEDCVLARDPYCAWSPPTATCVALHQTESPSRGLIQEMSGDAS. 4 cysteine pairs are disulfide-bonded: cysteine 503-cysteine 520, cysteine 509-cysteine 553, cysteine 512-cysteine 529, and cysteine 576-cysteine 624. The Ig-like C2-type domain occupies 554-636; sequence PDKSKGSYRQ…EERVKNKTVF (83 aa). Residues asparagine 613 and asparagine 632 are each glycosylated (N-linked (GlcNAc...) asparagine). A helical membrane pass occupies residues 735–755; that stretch reads LLMSLFLFFFVLFLCLFFYNC. Residues 756 to 862 lie on the Cytoplasmic side of the membrane; it reads YKGYLPRQCL…KFADSDADGD (107 aa). The segment at 794–837 is disordered; the sequence is VEPGSFSQQNGEHPKPALDTGYETEQDTITSKVPTDREDSQRID. A compositionally biased stretch (basic and acidic residues) spans 827 to 837; that stretch reads PTDREDSQRID. At serine 833 the chain carries Phosphoserine.

It belongs to the semaphorin family. In terms of assembly, homodimer. Interacts with PLXNB2. Interacts with PLXNB1. In terms of tissue distribution, strongly expressed in skeletal muscle, peripheral blood lymphocytes, spleen, and thymus and also expressed at lower levels in testes, brain, kidney, small intestine, prostate, heart, placenta, lung and pancreas, but not in colon and liver.

It is found in the cell membrane. Cell surface receptor for PLXNB1 and PLXNB2 that plays an important role in cell-cell signaling. Regulates GABAergic synapse development. Promotes the development of inhibitory synapses in a PLXNB1-dependent manner. Modulates the complexity and arborization of developing neurites in hippocampal neurons by activating PLXNB1 and interaction with PLXNB1 mediates activation of RHOA. Promotes the migration of cerebellar granule cells. Plays a role in the immune system; induces B-cells to aggregate and improves their viability (in vitro). Induces endothelial cell migration through the activation of PTK2B/PYK2, SRC, and the phosphatidylinositol 3-kinase-AKT pathway. The chain is Semaphorin-4D (SEMA4D) from Homo sapiens (Human).